The following is a 263-amino-acid chain: Phosphatidylglycerol--prolipoprotein diacylglyceryl transferase (263 aa).

The next 4 membrane-spanning stretches (helical) occupy residues 10–30, 56–76, 91–111, and 117–137; these read VAIT…LFGF, MVTY…ILFY, IWNG…AMWL, and GLGF…GLFF. An a 1,2-diacyl-sn-glycero-3-phospho-(1'-sn-glycerol)-binding site is contributed by Arg-139. 3 helical membrane passes run 171-191, 199-219, and 231-251; these read PSQL…LWVF, GHVS…VEFV, and FGWL…GLWL.

This sequence belongs to the Lgt family.

Its subcellular location is the cell inner membrane. The catalysed reaction is L-cysteinyl-[prolipoprotein] + a 1,2-diacyl-sn-glycero-3-phospho-(1'-sn-glycerol) = an S-1,2-diacyl-sn-glyceryl-L-cysteinyl-[prolipoprotein] + sn-glycerol 1-phosphate + H(+). It functions in the pathway protein modification; lipoprotein biosynthesis (diacylglyceryl transfer). Functionally, catalyzes the transfer of the diacylglyceryl group from phosphatidylglycerol to the sulfhydryl group of the N-terminal cysteine of a prolipoprotein, the first step in the formation of mature lipoproteins. This is Phosphatidylglycerol--prolipoprotein diacylglyceryl transferase from Nitratidesulfovibrio vulgaris (strain ATCC 29579 / DSM 644 / CCUG 34227 / NCIMB 8303 / VKM B-1760 / Hildenborough) (Desulfovibrio vulgaris).